A 637-amino-acid polypeptide reads, in one-letter code: tRNA 5-methylaminomethyl-2-thiouridine biosynthesis bifunctional protein MnmC (637 aa).

Residues 1-232 (MPERIEWLED…KRDNLQGEFN (232 aa)) form a tRNA (mnm(5)s(2)U34)-methyltransferase region. Residues 255–637 (IGAGLAGAAV…YGEAKLVSED (383 aa)) are FAD-dependent cmnm(5)s(2)U34 oxidoreductase.

The protein in the N-terminal section; belongs to the methyltransferase superfamily. tRNA (mnm(5)s(2)U34)-methyltransferase family. It in the C-terminal section; belongs to the DAO family. The cofactor is FAD.

The protein resides in the cytoplasm. It carries out the reaction 5-aminomethyl-2-thiouridine(34) in tRNA + S-adenosyl-L-methionine = 5-methylaminomethyl-2-thiouridine(34) in tRNA + S-adenosyl-L-homocysteine + H(+). Catalyzes the last two steps in the biosynthesis of 5-methylaminomethyl-2-thiouridine (mnm(5)s(2)U) at the wobble position (U34) in tRNA. Catalyzes the FAD-dependent demodification of cmnm(5)s(2)U34 to nm(5)s(2)U34, followed by the transfer of a methyl group from S-adenosyl-L-methionine to nm(5)s(2)U34, to form mnm(5)s(2)U34. This is tRNA 5-methylaminomethyl-2-thiouridine biosynthesis bifunctional protein MnmC from Polaromonas sp. (strain JS666 / ATCC BAA-500).